A 455-amino-acid chain; its full sequence is Serine--tRNA ligase (455 aa).

252 to 254 (TAE) serves as a coordination point for L-serine. Residues 283–285 (RKE) and Val-299 each bind ATP. Position 306 (Glu-306) interacts with L-serine. 370–373 (EVVS) lines the ATP pocket. Thr-406 contacts L-serine.

Belongs to the class-II aminoacyl-tRNA synthetase family. Type-1 seryl-tRNA synthetase subfamily. As to quaternary structure, homodimer. The tRNA molecule binds across the dimer.

Its subcellular location is the cytoplasm. The catalysed reaction is tRNA(Ser) + L-serine + ATP = L-seryl-tRNA(Ser) + AMP + diphosphate + H(+). It carries out the reaction tRNA(Sec) + L-serine + ATP = L-seryl-tRNA(Sec) + AMP + diphosphate + H(+). Its pathway is aminoacyl-tRNA biosynthesis; selenocysteinyl-tRNA(Sec) biosynthesis; L-seryl-tRNA(Sec) from L-serine and tRNA(Sec): step 1/1. Functionally, catalyzes the attachment of serine to tRNA(Ser). Is also able to aminoacylate tRNA(Sec) with serine, to form the misacylated tRNA L-seryl-tRNA(Sec), which will be further converted into selenocysteinyl-tRNA(Sec). The chain is Serine--tRNA ligase from Pyrococcus abyssi (strain GE5 / Orsay).